The sequence spans 151 residues: Regulatory protein RecX (151 aa).

The protein belongs to the RecX family.

The protein resides in the cytoplasm. In terms of biological role, modulates RecA activity. This Herminiimonas arsenicoxydans protein is Regulatory protein RecX.